The following is a 302-amino-acid chain: Myb-related protein Hv33 (302 aa).

2 consecutive HTH myb-type domains span residues Q11–L63 and R64–L118. DNA-binding regions (H-T-H motif) lie at residues W39–L63 and W91–I114. A disordered region spans residues A137–V158.

In terms of tissue distribution, germinating seed and apical meristem of shoot and root.

The protein resides in the nucleus. In terms of biological role, possible transcription activator in response to an external signal. May be involved in the regulation of flavonoid biosynthesis. This chain is Myb-related protein Hv33 (MYB2), found in Hordeum vulgare (Barley).